A 463-amino-acid chain; its full sequence is Quinolone resistance protein NorB (463 aa).

14 helical membrane-spanning segments follow: residues 19–39 (IVLS…VVLI), 53–73 (IAVS…GGLA), 86–106 (IILN…LLLI), 107–127 (IGRL…LSII), 142–162 (YWSI…GAVA), 165–185 (LGWR…LFLI), 201–221 (FDIK…ILIT), 230–250 (SLLF…FIVL), 273–293 (TASN…NTFV), 299–319 (YSLL…LIMI), 334–354 (PMLI…LTFL), 357–377 (ILYV…LGIY), 403–423 (MASA…YAIV), and 435–455 (IALW…LLLV).

The protein belongs to the major facilitator superfamily. TCR/Tet family.

The protein resides in the cell membrane. In terms of biological role, multidrug efflux pump that acts independently of NorA and is one of the factors that confers resistance against diverse quinolones and chemical compounds. The protein is Quinolone resistance protein NorB (norB) of Staphylococcus aureus (strain bovine RF122 / ET3-1).